We begin with the raw amino-acid sequence, 400 residues long: Enoyl-[acyl-carrier-protein] reductase [NADH] (400 aa).

NAD(+)-binding positions include 48–53 (GASTGY), 74–75 (FE), 111–112 (DA), and 139–140 (LA). Position 225 (Tyr-225) interacts with substrate. Tyr-235 acts as the Proton donor in catalysis. Residues Lys-244 and 273–275 (VVT) contribute to the NAD(+) site.

It belongs to the TER reductase family. As to quaternary structure, monomer.

The catalysed reaction is a 2,3-saturated acyl-[ACP] + NAD(+) = a (2E)-enoyl-[ACP] + NADH + H(+). The protein operates within lipid metabolism; fatty acid biosynthesis. Its function is as follows. Involved in the final reduction of the elongation cycle of fatty acid synthesis (FAS II). Catalyzes the reduction of a carbon-carbon double bond in an enoyl moiety that is covalently linked to an acyl carrier protein (ACP). The polypeptide is Enoyl-[acyl-carrier-protein] reductase [NADH] (Burkholderia ambifaria (strain ATCC BAA-244 / DSM 16087 / CCUG 44356 / LMG 19182 / AMMD) (Burkholderia cepacia (strain AMMD))).